Consider the following 241-residue polypeptide: Small ribosomal subunit protein uS2 (241 aa).

This sequence belongs to the universal ribosomal protein uS2 family.

The polypeptide is Small ribosomal subunit protein uS2 (Yersinia enterocolitica serotype O:8 / biotype 1B (strain NCTC 13174 / 8081)).